Consider the following 590-residue polypeptide: Sulfoacetaldehyde acetyltransferase (590 aa).

The protein belongs to the TPP enzyme family. Mg(2+) is required as a cofactor. The cofactor is thiamine diphosphate.

The protein localises to the cytoplasm. It carries out the reaction acetyl phosphate + sulfite + H(+) = sulfoacetaldehyde + phosphate. The protein operates within organosulfur degradation; taurine degradation via aerobic pathway; acetyl phosphate and sulfite from taurine: step 2/2. The chain is Sulfoacetaldehyde acetyltransferase from Rhodobacter capsulatus (strain ATCC BAA-309 / NBRC 16581 / SB1003).